Here is a 79-residue protein sequence, read N- to C-terminus: Small ribosomal subunit protein uS17 (79 aa).

This sequence belongs to the universal ribosomal protein uS17 family. In terms of assembly, part of the 30S ribosomal subunit.

One of the primary rRNA binding proteins, it binds specifically to the 5'-end of 16S ribosomal RNA. The chain is Small ribosomal subunit protein uS17 from Caulobacter vibrioides (strain NA1000 / CB15N) (Caulobacter crescentus).